The chain runs to 482 residues: Membrane-bound lytic murein transglycosylase F (482 aa).

The N-terminal stretch at 1-18 (MKGLFLRIITALALLFWA) is a signal peptide. Positions 19-267 (IDMVFPWQFL…NLKEKYLGHI (249 aa)) are non-LT domain. Positions 268 to 482 (SQFDYVDTRS…NLEEIKENED (215 aa)) are LT domain. Glutamate 312 is an active-site residue. The segment covering 457–470 (ENQTTNDNANNESA) has biased composition (polar residues). The segment at 457-482 (ENQTTNDNANNESAVKNLEEIKENED) is disordered. Residues 473–482 (NLEEIKENED) show a composition bias toward basic and acidic residues.

The protein in the N-terminal section; belongs to the bacterial solute-binding protein 3 family. In the C-terminal section; belongs to the transglycosylase Slt family.

The protein localises to the cell outer membrane. The enzyme catalyses Exolytic cleavage of the (1-&gt;4)-beta-glycosidic linkage between N-acetylmuramic acid (MurNAc) and N-acetylglucosamine (GlcNAc) residues in peptidoglycan, from either the reducing or the non-reducing ends of the peptidoglycan chains, with concomitant formation of a 1,6-anhydrobond in the MurNAc residue.. Its function is as follows. Murein-degrading enzyme that degrades murein glycan strands and insoluble, high-molecular weight murein sacculi, with the concomitant formation of a 1,6-anhydromuramoyl product. Lytic transglycosylases (LTs) play an integral role in the metabolism of the peptidoglycan (PG) sacculus. Their lytic action creates space within the PG sacculus to allow for its expansion as well as for the insertion of various structures such as secretion systems and flagella. This Haemophilus influenzae (strain PittGG) protein is Membrane-bound lytic murein transglycosylase F.